The primary structure comprises 443 residues: Chromosomal replication initiator protein DnaA (443 aa).

Residues Met-1–Phe-80 are domain I, interacts with DnaA modulators. Residues Phe-80–Pro-104 are domain II. The tract at residues Ser-83–Leu-105 is disordered. Over residues Asp-85–Ala-97 the composition is skewed to basic and acidic residues. The tract at residues Leu-105–Ala-321 is domain III, AAA+ region. Gly-149, Gly-151, Lys-152, and Thr-153 together coordinate ATP. The segment at Asn-322 to Ala-443 is domain IV, binds dsDNA.

It belongs to the DnaA family. As to quaternary structure, oligomerizes as a right-handed, spiral filament on DNA at oriC.

The protein resides in the cytoplasm. Its function is as follows. Plays an essential role in the initiation and regulation of chromosomal replication. ATP-DnaA binds to the origin of replication (oriC) to initiate formation of the DNA replication initiation complex once per cell cycle. Binds the DnaA box (a 9 base pair repeat at the origin) and separates the double-stranded (ds)DNA. Forms a right-handed helical filament on oriC DNA; dsDNA binds to the exterior of the filament while single-stranded (ss)DNA is stabiized in the filament's interior. The ATP-DnaA-oriC complex binds and stabilizes one strand of the AT-rich DNA unwinding element (DUE), permitting loading of DNA polymerase. After initiation quickly degrades to an ADP-DnaA complex that is not apt for DNA replication. Binds acidic phospholipids. This chain is Chromosomal replication initiator protein DnaA, found in Heliobacterium modesticaldum (strain ATCC 51547 / Ice1).